The following is a 154-amino-acid chain: Nuclear cap-binding protein subunit 2 (154 aa).

MRNA contacts are provided by residues Y10, Y33, 102 to 106 (RCDWD), 113 to 117 (RQYGR), and 123 to 124 (QV). In terms of domain architecture, RRM spans 30–108 (STLYMGNLSF…RIIRCDWDAG (79 aa)).

It belongs to the RRM NCBP2 family. Component of the nuclear cap-binding complex (CBC), a heterodimer composed of Cbp80 and Cbp20 that interacts with m7GpppG-capped RNA.

Its subcellular location is the nucleus. Its function is as follows. Component of the cap-binding complex (CBC), which binds co-transcriptionally to the 5' cap of pre-mRNAs and is involved in various processes such as pre-mRNA splicing and RNA-mediated gene silencing (RNAi). The CBC complex is involved in miRNA-mediated RNA interference and is required for primary microRNAs (miRNAs) processing. Also involved in innate immunity via the short interfering RNAs (siRNAs) processing machinery by restricting the viral RNA production. In the CBC complex, Cbp20 recognizes and binds capped RNAs (m7GpppG-capped RNA) but requires Cbp80 to stabilize the movement of its N-terminal loop and lock the CBC into a high affinity cap-binding state with the cap structure. The polypeptide is Nuclear cap-binding protein subunit 2 (Bombyx mori (Silk moth)).